We begin with the raw amino-acid sequence, 286 residues long: Pyridoxine 4-dehydrogenase (286 aa).

Tyr59 serves as the catalytic Proton donor. Position 210 to 218 (210 to 218 (FPLGGFTPL)) interacts with NADP(+).

Belongs to the aldo/keto reductase family. Aldo/keto reductase 2 subfamily.

It catalyses the reaction pyridoxine + NADP(+) = pyridoxal + NADPH + H(+). The enzyme catalyses pyridoxine + NAD(+) = pyridoxal + NADH + H(+). Catalyzes the NAD(P)H-dependent reduction of pyridoxal to pyridoxine in vitro. Is not able to reduce 4-pyridoxate, and to oxidize pyridoxine or pyridoxamine. Has Kemp eliminase activity towards the non-physiological substrate 5-nitrobenzisoxazole, producing 4-nitro-2-cyanophenol; this activity is not considered to be physiologically relevant. The sequence is that of Pyridoxine 4-dehydrogenase from Escherichia coli (strain K12).